The sequence spans 291 residues: GTPase Era (291 aa).

In terms of domain architecture, Era-type G spans 2–167; the sequence is KSGFVSIIGR…LDEIVKYLDK (166 aa). Positions 10–17 are G1; it reads GRTNAGKS. Position 10–17 (10–17) interacts with GTP; it reads GRTNAGKS. A G2 region spans residues 36-40; the sequence is NATRR. A G3 region spans residues 57–60; it reads DTPG. GTP is bound by residues 57–61 and 116–119; these read DTPGL and NKVD. Residues 116–119 are G4; the sequence is NKVD. The G5 stretch occupies residues 146-148; the sequence is YSS. The 89-residue stretch at 186 to 274 folds into the KH type-2 domain; it reads YRDFILESIY…LLKLFVTVKK (89 aa).

Belongs to the TRAFAC class TrmE-Era-EngA-EngB-Septin-like GTPase superfamily. Era GTPase family. Monomer.

It is found in the cytoplasm. The protein resides in the cell inner membrane. Functionally, an essential GTPase that binds both GDP and GTP, with rapid nucleotide exchange. Plays a role in 16S rRNA processing and 30S ribosomal subunit biogenesis and possibly also in cell cycle regulation and energy metabolism. The protein is GTPase Era of Campylobacter jejuni subsp. jejuni serotype O:6 (strain 81116 / NCTC 11828).